The primary structure comprises 320 residues: Acetyl-coenzyme A carboxylase carboxyl transferase subunit alpha (320 aa).

Residues 41 to 295 form the CoA carboxyltransferase C-terminal domain; that stretch reads RIEEKAGQAL…GEAIAQAFDE (255 aa).

It belongs to the AccA family. Acetyl-CoA carboxylase is a heterohexamer composed of biotin carboxyl carrier protein (AccB), biotin carboxylase (AccC) and two subunits each of ACCase subunit alpha (AccA) and ACCase subunit beta (AccD).

It is found in the cytoplasm. The enzyme catalyses N(6)-carboxybiotinyl-L-lysyl-[protein] + acetyl-CoA = N(6)-biotinyl-L-lysyl-[protein] + malonyl-CoA. It participates in lipid metabolism; malonyl-CoA biosynthesis; malonyl-CoA from acetyl-CoA: step 1/1. Its function is as follows. Component of the acetyl coenzyme A carboxylase (ACC) complex. First, biotin carboxylase catalyzes the carboxylation of biotin on its carrier protein (BCCP) and then the CO(2) group is transferred by the carboxyltransferase to acetyl-CoA to form malonyl-CoA. The chain is Acetyl-coenzyme A carboxylase carboxyl transferase subunit alpha from Bradyrhizobium sp. (strain BTAi1 / ATCC BAA-1182).